Reading from the N-terminus, the 89-residue chain is Small ribosomal subunit protein uS15 (89 aa).

Belongs to the universal ribosomal protein uS15 family. In terms of assembly, part of the 30S ribosomal subunit. Forms a bridge to the 50S subunit in the 70S ribosome, contacting the 23S rRNA.

In terms of biological role, one of the primary rRNA binding proteins, it binds directly to 16S rRNA where it helps nucleate assembly of the platform of the 30S subunit by binding and bridging several RNA helices of the 16S rRNA. Functionally, forms an intersubunit bridge (bridge B4) with the 23S rRNA of the 50S subunit in the ribosome. This chain is Small ribosomal subunit protein uS15, found in Rhodococcus erythropolis (strain PR4 / NBRC 100887).